Consider the following 451-residue polypeptide: REST corepressor 3 (451 aa).

A disordered region spans residues 1–55; it reads MPGMMEKGPELLGKSRSANGGAKSPAGGGGSSANGGLHFSEPESGCSSDDEHGDV. The region spanning 55 to 139 is the ELM2 domain; that stretch reads VGMRVGAEYQ…KSLADLPNFT (85 aa). A Glycyl lysine isopeptide (Lys-Gly) (interchain with G-Cter in SUMO2) cross-link involves residue Lys76. Positions 140-191 constitute an SANT domain; that stretch reads PFPDEWTVEDKVLFEQAFSFHGKSFHRIQQMLPDKTIASLVKYYYSWKKTRS. Positions 204 to 275 are disordered; sequence ANRHNQGDSD…SQRSKCRPPK (72 aa). Residues Ser212 and Ser227 each carry the phosphoserine modification. Basic and acidic residues predominate over residues 218 to 240; the sequence is EAHPMDGNDSDYDPKKEAKREGN. Lys249 participates in a covalent cross-link: Glycyl lysine isopeptide (Lys-Gly) (interchain with G-Cter in SUMO2). Over residues 261–273 the composition is skewed to basic residues; it reads QHRHHSQRSKCRP. Positions 293–329 form a coiled coil; it reads AANTILRQLDMELISLKRQVQNAKQVNSALKQKMEGG. Residues 333–451 form a disordered region; it reads FKPPEAQTPQ…IQTDSQPSLH (119 aa). A compositionally biased stretch (pro residues) spans 349 to 361; sequence PSPPAPSSTPTPT. Residues 375-384 show a composition bias toward low complexity; that stretch reads RPTLPAAPAL. Asymmetric dimethylarginine is present on residues Arg401 and Arg413. A compositionally biased stretch (polar residues) spans 431 to 451; it reads VGGQQPPSLIGIQTDSQPSLH.

This sequence belongs to the CoREST family.

The protein localises to the nucleus. Its function is as follows. May act as a component of a corepressor complex that represses transcription. The polypeptide is REST corepressor 3 (Rcor3) (Mus musculus (Mouse)).